The chain runs to 748 residues: 5-methyltetrahydropteroyltriglutamate--homocysteine methyltransferase (748 aa).

5-methyltetrahydropteroyltri-L-glutamate-binding positions include 18–21 and Lys112; that span reads REWK. Residues 420–422 and Glu473 contribute to the L-homocysteine site; that span reads IGS. L-methionine is bound by residues 420–422 and Glu473; that span reads IGS. Residue Trp550 coordinates 5-methyltetrahydropteroyltri-L-glutamate. Asp588 serves as a coordination point for L-homocysteine. Asp588 contacts L-methionine. Residue Glu594 participates in 5-methyltetrahydropteroyltri-L-glutamate binding. Residues His630, Cys632, and Glu654 each contribute to the Zn(2+) site. His683 (proton donor) is an active-site residue. Zn(2+) is bound at residue Cys715.

Belongs to the vitamin-B12 independent methionine synthase family. Requires Zn(2+) as cofactor.

The catalysed reaction is 5-methyltetrahydropteroyltri-L-glutamate + L-homocysteine = tetrahydropteroyltri-L-glutamate + L-methionine. It functions in the pathway amino-acid biosynthesis; L-methionine biosynthesis via de novo pathway; L-methionine from L-homocysteine (MetE route): step 1/1. Its function is as follows. Catalyzes the transfer of a methyl group from 5-methyltetrahydrofolate to homocysteine resulting in methionine formation. The sequence is that of 5-methyltetrahydropteroyltriglutamate--homocysteine methyltransferase from Staphylococcus epidermidis (strain ATCC 35984 / DSM 28319 / BCRC 17069 / CCUG 31568 / BM 3577 / RP62A).